The following is a 275-amino-acid chain: Large ribosomal subunit protein uL2 (275 aa).

The span at 38-53 (SSKAGRNNNGRITTRH) shows a compositional bias: polar residues. Disordered stretches follow at residues 38–60 (SSKA…GHKQ) and 224–257 (AMNP…KGFR).

The protein belongs to the universal ribosomal protein uL2 family. In terms of assembly, part of the 50S ribosomal subunit. Forms a bridge to the 30S subunit in the 70S ribosome.

Functionally, one of the primary rRNA binding proteins. Required for association of the 30S and 50S subunits to form the 70S ribosome, for tRNA binding and peptide bond formation. It has been suggested to have peptidyltransferase activity; this is somewhat controversial. Makes several contacts with the 16S rRNA in the 70S ribosome. This Burkholderia pseudomallei (strain 1106a) protein is Large ribosomal subunit protein uL2.